Here is a 356-residue protein sequence, read N- to C-terminus: Trans-enoyl reductase pgmF (356 aa).

NADP(+) contacts are provided by residues 57–60 (VDFK), 175–178 (SGGC), 198–201 (STPN), tyrosine 216, 261–262 (VG), and 342–343 (AK).

It belongs to the zinc-containing alcohol dehydrogenase family.

FAD-linked oxidoreductase; part of the gene cluster that mediates the biosynthesis of pleosporalin A, ascomycone A, as well as a third cryptic naphthoquinone derived pigment, all responsible for the coloration of conidia. The pathway begins with the biosynthesis of the cyclized heptaketide 3-acetonyl-1,6,8-trihydroxy-2-naphthaldehyde by the NR-PKS pgmA. The C-6 hydroxyl group is further methylated by the O-methyltransferase pgmB to yield fusarubinaldehyde which is in turn oxidized by the cytochrome P450 monooxygenase pgmC at C-9. The C-1 hydroxyl group is then methylated spontaneously. Although pgmE, pgmD and pgmH are essential for the production of pleosporalin A, it is not the case for the 2 other final products and it remains difficult to assign a specific function to each enzyme. PgmF and pgmG seem not to be involved in pigment biosynthesis although they were regulated by the cluster-specific transcription factor pgmR. The chain is Trans-enoyl reductase pgmF from Aspergillus terreus (strain NIH 2624 / FGSC A1156).